The chain runs to 797 residues: Inactive deaminase YBR284W (797 aa).

The helical transmembrane segment at 627 to 647 (LVYLFYLSQIPMVVAPLNSIV) threads the bilayer.

Belongs to the metallo-dependent hydrolases superfamily. Adenosine and AMP deaminases family.

It is found in the membrane. The sequence is that of Inactive deaminase YBR284W from Saccharomyces cerevisiae (strain ATCC 204508 / S288c) (Baker's yeast).